A 337-amino-acid polypeptide reads, in one-letter code: DNA replication regulator sld2 (337 aa).

Phosphothreonine; by cdc2 occurs at positions 60 and 74. A disordered region spans residues 71–97 (KFQTPTKQRAETEANESPKAPRNDYLQ). Phosphoserine; by cdc2 is present on S87. Residues T99 and T154 each carry the phosphothreonine; by cdc2 modification. The residue at position 183 (S183) is a Phosphoserine. The segment at 258 to 302 (SMNLSKSHLEGLPEIDEDAENGIDDNEDTTASKDSSPFLDLQSER) is disordered. Over residues 270 to 285 (PEIDEDAENGIDDNED) the composition is skewed to acidic residues.

This sequence belongs to the SLD2 family. As to quaternary structure, interacts with rad4. In terms of processing, phosphorylated by cdc2 at the onset of S-phase.

The protein resides in the cytoplasm. It localises to the nucleus. Functionally, has a role in the initiation of DNA replication. Required at S-phase checkpoint. The chain is DNA replication regulator sld2 (drc1) from Schizosaccharomyces pombe (strain 972 / ATCC 24843) (Fission yeast).